The primary structure comprises 503 residues: Probable cytosol aminopeptidase (503 aa).

2 residues coordinate Mn(2+): lysine 270 and aspartate 275. Lysine 282 is an active-site residue. Positions 293, 352, and 354 each coordinate Mn(2+). Residue arginine 356 is part of the active site.

This sequence belongs to the peptidase M17 family. Mn(2+) serves as cofactor.

The protein resides in the cytoplasm. It catalyses the reaction Release of an N-terminal amino acid, Xaa-|-Yaa-, in which Xaa is preferably Leu, but may be other amino acids including Pro although not Arg or Lys, and Yaa may be Pro. Amino acid amides and methyl esters are also readily hydrolyzed, but rates on arylamides are exceedingly low.. The catalysed reaction is Release of an N-terminal amino acid, preferentially leucine, but not glutamic or aspartic acids.. In terms of biological role, presumably involved in the processing and regular turnover of intracellular proteins. Catalyzes the removal of unsubstituted N-terminal amino acids from various peptides. This Yersinia pseudotuberculosis serotype O:1b (strain IP 31758) protein is Probable cytosol aminopeptidase.